The following is a 466-amino-acid chain: Asparagine--tRNA ligase (466 aa).

It belongs to the class-II aminoacyl-tRNA synthetase family. As to quaternary structure, homodimer.

The protein localises to the cytoplasm. It catalyses the reaction tRNA(Asn) + L-asparagine + ATP = L-asparaginyl-tRNA(Asn) + AMP + diphosphate + H(+). The sequence is that of Asparagine--tRNA ligase from Xylella fastidiosa (strain 9a5c).